Here is a 429-residue protein sequence, read N- to C-terminus: Adenylosuccinate synthetase (429 aa).

GTP-binding positions include 12–18 (GDEGKGK) and 40–42 (GHT). Aspartate 13 functions as the Proton acceptor in the catalytic mechanism. Residues aspartate 13 and glycine 40 each coordinate Mg(2+). Residues 13-16 (DEGK), 38-41 (NAGH), threonine 129, arginine 143, glutamine 223, threonine 238, and arginine 302 each bind IMP. The Proton donor role is filled by histidine 41. 298 to 304 (TVTGRRR) contacts substrate. GTP contacts are provided by residues arginine 304, 330–332 (KLD), and 412–414 (STS).

This sequence belongs to the adenylosuccinate synthetase family. As to quaternary structure, homodimer. It depends on Mg(2+) as a cofactor.

It localises to the cytoplasm. It carries out the reaction IMP + L-aspartate + GTP = N(6)-(1,2-dicarboxyethyl)-AMP + GDP + phosphate + 2 H(+). Its pathway is purine metabolism; AMP biosynthesis via de novo pathway; AMP from IMP: step 1/2. Plays an important role in the de novo pathway of purine nucleotide biosynthesis. Catalyzes the first committed step in the biosynthesis of AMP from IMP. The sequence is that of Adenylosuccinate synthetase from Zymomonas mobilis subsp. mobilis (strain ATCC 31821 / ZM4 / CP4).